The following is a 428-amino-acid chain: Chaperone SurA (428 aa).

The N-terminal stretch at 1 to 20 (MKNWKTLLLGIAMIANTSFA) is a signal peptide. PpiC domains are found at residues 171–272 (STEL…KVND) and 282–382 (VTEV…ELLD).

It is found in the periplasm. It carries out the reaction [protein]-peptidylproline (omega=180) = [protein]-peptidylproline (omega=0). Its function is as follows. Chaperone involved in the correct folding and assembly of outer membrane proteins. Recognizes specific patterns of aromatic residues and the orientation of their side chains, which are found more frequently in integral outer membrane proteins. May act in both early periplasmic and late outer membrane-associated steps of protein maturation. The polypeptide is Chaperone SurA (Salmonella choleraesuis (strain SC-B67)).